Reading from the N-terminus, the 176-residue chain is MAVNKGYTGYNKELNAMAATHAYIRLSTLMSQIESWQATRASVLTHLGVMLNGVSKLGERSFFSRTKRFGAHTSDGDEIFCDLGGEAVTQILSRLTVALQSARGEGAQTRNAKRGAAPGTSQVENEEQGQTDQTLAISNAVAELMIFVRTKDFTMNECYTQDSFEAKYNLKWEGSS.

The interval 103-132 is disordered; the sequence is RGEGAQTRNAKRGAAPGTSQVENEEQGQTD.

This sequence belongs to the virgaviridae capsid protein family.

The protein resides in the virion. Its function is as follows. Capsid protein self-assembles to form rod-shaped virions about 20 nm in diameter with a central canal enclosing the viral genomic RNA. Isoform N-CP does not seem to be required for virion formation and systemic infection in host plant. The protein is Capsid protein (CP) of Hordeum vulgare (Barley).